A 2626-amino-acid polypeptide reads, in one-letter code: Unconventional myosin-IXa (2626 aa).

Residues 14 to 112 (NEHTLRIYPG…YRFLLREKNL (99 aa)) form the Ras-associating domain. Residues 146–1017 (KDFDDLCSLP…ERQHLQDLLH (872 aa)) form the Myosin motor domain. The chain crosses the membrane as a helical span at residues 175–195 (IYTYVGSILIAINPFKFLPIY). 239-246 (GESGSGKT) is a binding site for ATP. Ser755 bears the Phosphoserine mark. An actin-binding region spans residues 908–919 (QAEPYFVKCIRS). 5 consecutive IQ domains span residues 1021–1041 (LRRIILLQRWFRVLLSRQQFL), 1043–1072 (LRQASVIIQRFWRNYLNQKQVRNAAVEKDA), 1075–1104 (MASAASLLQASWRAHLERQRYLELRAAAVI), 1116–1145 (RHRAATCIQSRWRGYRQSKKYKEQRNKIIL), and 1139–1168 (QRNKIILLQSIYRGFRARQRYKALKEERLK). The segment at 1022–1163 (RRIILLQRWF…RARQRYKALK (142 aa)) is neck or regulatory domain. Positions 1164-2589 (EERLKETKLE…LKNVKNSPQK (1426 aa)) are tail. The segment covering 1221 to 1240 (RESSMDFSKESPDKQQERGR) has biased composition (basic and acidic residues). Residues 1221–1276 (RESSMDFSKESPDKQQERGRSQSGTDLQGDVIVRQRPKSLEDLHQKKVGRAKRESR) are disordered. Ser1243 carries the phosphoserine modification. Thr1245 is modified (phosphothreonine). Position 1259 is a phosphoserine (Ser1259). A coiled-coil region spans residues 1265-1292 (QKKVGRAKRESRRMRELEQAIFSLELLK). Residues 1266–1276 (KKVGRAKRESR) are compositionally biased toward basic residues. 2 positions are modified to phosphoserine: Ser1300 and Ser1318. The span at 1360–1375 (PSTFTNPKFDSQNNAL) shows a compositional bias: polar residues. The tract at residues 1360 to 1397 (PSTFTNPKFDSQNNALSASSETSSTFSGKGASSDSEHL) is disordered. A compositionally biased stretch (low complexity) spans 1376-1386 (SASSETSSTFS). Residues 1493–1540 (TVLKKLEKLNIEKEKRQKQLQQQNEKEMMEQIRQQTDILEKERKAFKT) are a coiled coil. Disordered regions lie at residues 1562-1602 (VERP…PPKD), 1618-1673 (SRTV…SRPI), 1689-1726 (GNPQVHKQDEPAWKSKLAGPGQREVARPAHKKKARMAR), 1765-1784 (SELGPVSSLGQASHSDSEMT), and 1872-1907 (QYHPTPPLSPELPGSCRKEFKENKEPSPKAKRKRGV). Basic and acidic residues-rich tracts occupy residues 1620-1632 (TVKELTKTERMGT) and 1659-1669 (HRSDDPSREGS). The span at 1716–1726 (PAHKKKARMAR) shows a compositional bias: basic residues. The segment covering 1772–1784 (SLGQASHSDSEMT) has biased composition (polar residues). The span at 1887–1899 (CRKEFKENKEPSP) shows a compositional bias: basic and acidic residues. Ser2016 carries the phosphoserine modification. A Phorbol-ester/DAG-type zinc finger spans residues 2067–2116 (GHMFKATQYSIPTYCEYCSSLIWIMDRASVCKLCKYACHKKCCLKTTAKC). Residues 2131 to 2319 (VELSRLTSED…LIVVEQMNKY (189 aa)) form the Rho-GAP domain. Positions 2365–2385 (SGKGRLHRGSHPNPSSPVIVR) are disordered. Ser2380 carries the phosphoserine modification. The stretch at 2408-2444 (TDQQQAAMQQEEKVLTEQIENLQKEKEELTFEMLVLE) forms a coiled coil. A disordered region spans residues 2449–2527 (DDEALESEAS…NTTSSHGTRK (79 aa)). A compositionally biased stretch (low complexity) spans 2504 to 2522 (SLDSVSSSVSSCLSNTTSS). The residue at position 2542 (Ser2542) is a Phosphoserine. The disordered stretch occupies residues 2552 to 2614 (PLGQAKSLED…TVDSDCSSTQ (63 aa)).

Belongs to the TRAFAC class myosin-kinesin ATPase superfamily. Myosin family. Phosphorylated by ALPK1 following monosodium urate monohydrate (MSU)-induced inflammation. Expressed at high levels in brain, followed by testis and spleen. Expressed at very low levels, in kidney. Detected abundantly in brain and testis and at lower levels in adrenal gland, kidney, lung and spleen (at protein level). In adrenal gland it is mostly found in the medulla but not in the cortex. In brain, it is found in the cerebellum and the CA2-CA3 regions of the hippocampus.

It localises to the membrane. It is found in the cytoplasm. The protein localises to the synapse. The protein resides in the cell projection. Its subcellular location is the growth cone. In terms of biological role, myosins are actin-based motor molecules with ATPase activity. Unconventional myosins serve in intracellular movements. Regulates Rho by stimulating it's GTPase activity in neurons. Required for the regulation of neurite branching and motor neuron axon guidance. This Rattus norvegicus (Rat) protein is Unconventional myosin-IXa (Myo9a).